Reading from the N-terminus, the 235-residue chain is Type III pantothenate kinase (235 aa).

Position 6–13 (6–13) interacts with ATP; the sequence is DVGNNYIK. Residues tyrosine 81 and 88–91 each bind substrate; that span reads GTDR. Aspartate 90 (proton acceptor) is an active-site residue. Aspartate 111 provides a ligand contact to K(+). ATP is bound at residue threonine 114. A substrate-binding site is contributed by threonine 166.

It belongs to the type III pantothenate kinase family. As to quaternary structure, homodimer. NH4(+) is required as a cofactor. It depends on K(+) as a cofactor.

Its subcellular location is the cytoplasm. The catalysed reaction is (R)-pantothenate + ATP = (R)-4'-phosphopantothenate + ADP + H(+). The protein operates within cofactor biosynthesis; coenzyme A biosynthesis; CoA from (R)-pantothenate: step 1/5. Functionally, catalyzes the phosphorylation of pantothenate (Pan), the first step in CoA biosynthesis. This Cytophaga hutchinsonii (strain ATCC 33406 / DSM 1761 / CIP 103989 / NBRC 15051 / NCIMB 9469 / D465) protein is Type III pantothenate kinase.